A 474-amino-acid chain; its full sequence is Siroheme synthase (474 aa).

Positions 1–203 are precorrin-2 dehydrogenase /sirohydrochlorin ferrochelatase; it reads MKLFPLFADL…QRPEEAERLL (203 aa). Residues 22 to 23 and 43 to 44 each bind NAD(+); these read EI and PA. Serine 128 carries the phosphoserine modification. The segment at 216–474 is uroporphyrinogen-III C-methyltransferase; sequence GSVVLVGAGP…QRPAPAALAA (259 aa). Residue proline 225 coordinates S-adenosyl-L-methionine. The Proton acceptor role is filled by aspartate 248. Lysine 270 functions as the Proton donor in the catalytic mechanism. S-adenosyl-L-methionine is bound by residues 302 to 304, isoleucine 307, 332 to 333, methionine 384, and glycine 413; these read GGD and TA.

It in the N-terminal section; belongs to the precorrin-2 dehydrogenase / sirohydrochlorin ferrochelatase family. This sequence in the C-terminal section; belongs to the precorrin methyltransferase family.

It catalyses the reaction uroporphyrinogen III + 2 S-adenosyl-L-methionine = precorrin-2 + 2 S-adenosyl-L-homocysteine + H(+). It carries out the reaction precorrin-2 + NAD(+) = sirohydrochlorin + NADH + 2 H(+). The enzyme catalyses siroheme + 2 H(+) = sirohydrochlorin + Fe(2+). It participates in cofactor biosynthesis; adenosylcobalamin biosynthesis; precorrin-2 from uroporphyrinogen III: step 1/1. The protein operates within cofactor biosynthesis; adenosylcobalamin biosynthesis; sirohydrochlorin from precorrin-2: step 1/1. Its pathway is porphyrin-containing compound metabolism; siroheme biosynthesis; precorrin-2 from uroporphyrinogen III: step 1/1. It functions in the pathway porphyrin-containing compound metabolism; siroheme biosynthesis; siroheme from sirohydrochlorin: step 1/1. It participates in porphyrin-containing compound metabolism; siroheme biosynthesis; sirohydrochlorin from precorrin-2: step 1/1. Multifunctional enzyme that catalyzes the SAM-dependent methylations of uroporphyrinogen III at position C-2 and C-7 to form precorrin-2 via precorrin-1. Then it catalyzes the NAD-dependent ring dehydrogenation of precorrin-2 to yield sirohydrochlorin. Finally, it catalyzes the ferrochelation of sirohydrochlorin to yield siroheme. The protein is Siroheme synthase of Bordetella petrii (strain ATCC BAA-461 / DSM 12804 / CCUG 43448).